The following is a 222-amino-acid chain: MKQESAAQSTPPPSLSPAPSAQPSWEDGDPQALWIFGYGSLVWKPDFAYSDSRVGFVRGYSRRFWQGDTFHRGSDKMPGRVVTLLEDHEGCTWGVAYQVRGEQVSEALKYLNVREAVLGGYDTKEVTFYPQDTPDQPLTALAYVATPQNPGYLGPAPEEVIATQILACRGFSGHNLEYLLRLADFMQLCGPQAQDEHLEAIVDAVGSLLPCSYLSEQPLALI.

A disordered region spans residues 1–25 (MKQESAAQSTPPPSLSPAPSAQPSW). 35–40 (IFGYGS) contacts substrate. The active-site Proton acceptor is the Glu-115.

It belongs to the gamma-glutamylcyclotransferase family. ChaC subfamily. As to quaternary structure, interacts with NOTCH1 (via extracellular region).

It is found in the cytoplasm. The protein localises to the cytosol. It localises to the golgi apparatus. The protein resides in the trans-Golgi network. The enzyme catalyses glutathione = L-cysteinylglycine + 5-oxo-L-proline. Its function is as follows. Catalyzes the cleavage of glutathione into 5-oxo-L-proline and a Cys-Gly dipeptide. Acts specifically on glutathione, but not on other gamma-glutamyl peptides. Glutathione depletion is an important factor for apoptosis initiation and execution. Acts as a pro-apoptotic component of the unfolded protein response pathway by mediating the pro-apoptotic effects of the ATF4-ATF3-DDIT3/CHOP cascade. Negative regulator of Notch signaling pathway involved in embryonic neurogenesis: acts by inhibiting Notch cleavage by furin, maintaining Notch in an immature inactive form, thereby promoting neurogenesis in embryos. The chain is Glutathione-specific gamma-glutamylcyclotransferase 1 from Rattus norvegicus (Rat).